The chain runs to 250 residues: DNA repair protein RecO (250 aa).

Belongs to the RecO family.

Involved in DNA repair and RecF pathway recombination. The protein is DNA repair protein RecO of Lactobacillus acidophilus (strain ATCC 700396 / NCK56 / N2 / NCFM).